Reading from the N-terminus, the 628-residue chain is Glutamine--fructose-6-phosphate aminotransferase [isomerizing] (628 aa).

Catalysis depends on C2, which acts as the Nucleophile; for GATase activity. Residues 2–229 form the Glutamine amidotransferase type-2 domain; it reads CGIVGYVGHR…QDQAVVLTAD (228 aa). The disordered stretch occupies residues 61–94; it reads ETDSNDGDGLGGSTGLGHTRWATHGRPTDRNAHP. SIS domains follow at residues 301–440 and 473–618; these read SDQE…ARGT and LAER…VDKP. K623 functions as the For Fru-6P isomerization activity in the catalytic mechanism.

As to quaternary structure, homodimer.

It localises to the cytoplasm. It carries out the reaction D-fructose 6-phosphate + L-glutamine = D-glucosamine 6-phosphate + L-glutamate. In terms of biological role, catalyzes the first step in hexosamine metabolism, converting fructose-6P into glucosamine-6P using glutamine as a nitrogen source. The protein is Glutamine--fructose-6-phosphate aminotransferase [isomerizing] of Mycolicibacterium smegmatis (strain ATCC 700084 / mc(2)155) (Mycobacterium smegmatis).